The following is a 137-amino-acid chain: ATP synthase epsilon chain (137 aa).

Belongs to the ATPase epsilon chain family. In terms of assembly, F-type ATPases have 2 components, CF(1) - the catalytic core - and CF(0) - the membrane proton channel. CF(1) has five subunits: alpha(3), beta(3), gamma(1), delta(1), epsilon(1). CF(0) has three main subunits: a, b and c.

Its subcellular location is the cellular thylakoid membrane. Produces ATP from ADP in the presence of a proton gradient across the membrane. This is ATP synthase epsilon chain from Synechococcus sp. (strain JA-2-3B'a(2-13)) (Cyanobacteria bacterium Yellowstone B-Prime).